The sequence spans 2026 residues: Fatty acid synthase subunit beta (2026 aa).

Residues 148–526 (ILMAFGGQGS…VDGRGVRIIA (379 aa)) are acetyltransferase (AT) domain. The For acetyltransferase activity role is filled by Ser-268. Residues 579–824 (SQLLQAPPII…LILAAAGVAD (246 aa)) are enoyl reductase (ER) domain. Residues 1130 to 1604 (SQVTGSVRSA…LPGDQLTVRI (475 aa)) form a dehydratase (DH) domain region. The region spanning 1512-1625 (PGLIDNGSRT…LSVAAYREGT (114 aa)) is the MaoC-like domain. The segment at 1643–2016 (YLFTGQGSQA…LEEAAAVTGS (374 aa)) is malonyl/palmitoyl transferase (MT/PT) domain. Ser-1788 (for malonyltransferase activity) is an active-site residue.

Belongs to the fungal fatty acid synthetase subunit beta family. In terms of assembly, [Alpha(6)beta(6)] hexamers of two multifunctional subunits (alpha and beta).

It carries out the reaction acetyl-CoA + n malonyl-CoA + 2n NADPH + 4n H(+) = a long-chain-acyl-CoA + n CoA + n CO2 + 2n NADP(+).. It catalyses the reaction holo-[ACP] + acetyl-CoA = acetyl-[ACP] + CoA. The catalysed reaction is holo-[ACP] + malonyl-CoA = malonyl-[ACP] + CoA. The enzyme catalyses a (3R)-hydroxyacyl-[ACP] = a (2E)-enoyl-[ACP] + H2O. It carries out the reaction a 2,3-saturated acyl-[ACP] + NAD(+) = a (2E)-enoyl-[ACP] + NADH + H(+). It catalyses the reaction (9Z)-octadecenoyl-[ACP] + H2O = (9Z)-octadecenoate + holo-[ACP] + H(+). Its pathway is secondary metabolite biosynthesis. In terms of biological role, fatty acid synthase beta subunit; part of the gene cluster that mediates the biosynthesis of oryzines, natural products with an unusual maleidride backbone. The two subunits of the fungal fatty acid synthase oryfasA and oryfasB probably form octenoic acid. This fatty acid is most likely activated by the acyl-CoA ligase oryP to give octenyl-CoA before the citrate synthase-like protein oryE catalyzes condensation with oxaloacetate to form tricarboxylic acid. The next steps of the pathways are conjectural, but a favorite possible route has been proposed, beginning with decarboxylation and concomitant dehydration by the decarboxylase oryM, followed by tautomerization, which may lead to the production of a diene intermediate. Reduction of this diene intermediate could give the known metabolite piliformic acid. On the pathway to oryzine B and oryzine A, however, hydroxylation of the diene by the alpha-ketoglutarate-dependent dioxygenase oryG and lactonisation by the lactonohydrolases oryH or oryL could give oryzine B directly. Finally, enoyl reduction by the dehydrogenase oryD would then convert oryzine B into oryzine A. This Aspergillus oryzae (strain ATCC 42149 / RIB 40) (Yellow koji mold) protein is Fatty acid synthase subunit beta.